Reading from the N-terminus, the 456-residue chain is Phosphomannomutase (456 aa).

Catalysis depends on Ser98, which acts as the Phosphoserine intermediate. Mg(2+) is bound by residues Ser98, Asp245, Asp247, and Asp249.

It belongs to the phosphohexose mutase family. Mg(2+) is required as a cofactor.

It carries out the reaction alpha-D-mannose 1-phosphate = D-mannose 6-phosphate. Its pathway is nucleotide-sugar biosynthesis; GDP-alpha-D-mannose biosynthesis; alpha-D-mannose 1-phosphate from D-fructose 6-phosphate: step 2/2. Functionally, involved in the biosynthesis of the capsular polysaccharide colanic acid. The protein is Phosphomannomutase (manB) of Salmonella typhimurium (strain LT2 / SGSC1412 / ATCC 700720).